The chain runs to 199 residues: DnaJ homolog subfamily C member 5B (199 aa).

Phosphoserine occurs at positions 14 and 16. Positions 19 to 84 (ALYEILGLHK…SKRNIYDKYG (66 aa)) constitute a J domain.

In terms of assembly, interacts with the chaperone complex consisting of HSC70 and SGTA. In terms of processing, palmitoylated.

The protein resides in the membrane. The chain is DnaJ homolog subfamily C member 5B (DNAJC5B) from Sus scrofa (Pig).